Reading from the N-terminus, the 479-residue chain is Glutathione gamma-glutamylcysteinyltransferase 3 (479 aa).

Residues 1–221 form the Peptidase C83 domain; the sequence is MASAGLYRRV…GYMIISKLKR (221 aa). Catalysis depends on residues Cys56, His162, and Asp180.

It belongs to the phytochelatin synthase family. In terms of tissue distribution, expressed in roots, nodules and leaves.

The catalysed reaction is [Glu(-Cys)](n)-Gly + glutathione + H(+) = [Glu(-Cys)](n+1)-Gly + glycine. Requires cadmium for activity. In terms of biological role, involved in the synthesis of phytochelatins (PC) and homophytochelatins (hPC), the heavy-metal-binding peptides of plants. The polypeptide is Glutathione gamma-glutamylcysteinyltransferase 3 (PCS3) (Lotus japonicus (Lotus corniculatus var. japonicus)).